Consider the following 29-residue polypeptide: GLWSKIKETGKEAAKAAGKAALNKIAEAV.

Residue V29 is modified to Valine amide.

In terms of tissue distribution, expressed by the skin glands.

The protein localises to the secreted. In terms of biological role, antimicrobial peptide, active against the Gram-positive bacterium S.aureus, the Gram-negative bacteria E.coli and P.aeruginosa, and the yeasts C.albicans and P.brasiliensis. Has hemolytic activity (40% hemolysis at 128 ug/ml). The protein is Dermaseptin-1 of Phyllomedusa tarsius (Brownbelly leaf frog).